The primary structure comprises 141 residues: MAKKVVAVIKLALNAGKANPAPPVGPALGQHGVNIMMFCKEYNAKTADQAGMVIPVEISVFEDRSFTFVLKTPPASVLIRKAAKVEKGSNEPNKKKVGSITKAQLQEIAQTKLPDLNANDIDAAMKIVAGTAKNMGITVKD.

The protein belongs to the universal ribosomal protein uL11 family. As to quaternary structure, part of the ribosomal stalk of the 50S ribosomal subunit. Interacts with L10 and the large rRNA to form the base of the stalk. L10 forms an elongated spine to which L12 dimers bind in a sequential fashion forming a multimeric L10(L12)X complex. In terms of processing, one or more lysine residues are methylated.

Forms part of the ribosomal stalk which helps the ribosome interact with GTP-bound translation factors. The chain is Large ribosomal subunit protein uL11 from Nostoc punctiforme (strain ATCC 29133 / PCC 73102).